The following is a 341-amino-acid chain: MATIKDVAKRAGVSTTTVSHVINKTRFVAENTRAAVWAAIKELNYSPSAVARSLKVNHTKSIGLLATSSEAPYFAEVIEAVENSCYSKGYTLILCNSHNNLDKQKAYLAMLAQKRVDGLLVMCSEYPDHLLSLLEGYRNIPMVVMDWGKARGDFTDTIIDNAFHGGYIAGRYLIERGHRDIGIIPGPLERNTGGGRLQGFLKAMEEAKITVKEEWIVQGDFEPESGYKAMTQMLNQKQRPTAVFCGGDVMAMGAICAADELGLRVPADISIVGYDNIRNARYFTPALTTVHQPKERLGQMAFSMLLDRIVNKREDAQTIEVHPRLVERRSVADGPFIDYRR.

Residues 2-56 (ATIKDVAKRAGVSTTTVSHVINKTRFVAENTRAAVWAAIKELNYSPSAVARSLKV) form the HTH lacI-type domain. Positions 4–23 (IKDVAKRAGVSTTTVSHVIN) form a DNA-binding region, H-T-H motif. The DNA-binding element occupies 48–56 (SAVARSLKV). The hypoxanthine site is built by tyrosine 73, arginine 190, threonine 192, phenylalanine 221, and aspartate 275.

As to quaternary structure, homodimer.

It functions in the pathway purine metabolism; purine nucleotide biosynthesis [regulation]. Functionally, is the main repressor of the genes involved in the de novo synthesis of purine nucleotides, regulating purB, purC, purEK, purF, purHD, purL, purMN and guaBA expression. PurR is allosterically activated to bind its cognate DNA by binding the purine corepressors, hypoxanthine or guanine, thereby effecting transcription repression. The sequence is that of HTH-type transcriptional repressor PurR from Proteus mirabilis (strain HI4320).